Reading from the N-terminus, the 300-residue chain is Neutral protease NprE (300 aa).

A Ca(2+)-binding site is contributed by D139. Residue H143 participates in Zn(2+) binding. Residue E144 is part of the active site. Zn(2+)-binding residues include H147 and E167. The Ca(2+) site is built by D178, D181, D183, and E186. H228 (proton donor) is an active-site residue.

Belongs to the peptidase M4 family. Ca(2+) is required as a cofactor. Zn(2+) serves as cofactor.

It localises to the secreted. It catalyses the reaction Similar, but not identical, to that of thermolysin.. Its function is as follows. Extracellular zinc metalloprotease. This Bacillus pumilus (Bacillus mesentericus) protein is Neutral protease NprE (nprE).